Consider the following 98-residue polypeptide: NADH-ubiquinone oxidoreductase chain 4L (98 aa).

Helical transmembrane passes span 1 to 21, 29 to 49, and 61 to 81; these read MSMV…GMLV, SLLC…VTIL, and IVLL…LVMV.

This sequence belongs to the complex I subunit 4L family. In terms of assembly, core subunit of respiratory chain NADH dehydrogenase (Complex I) which is composed of 45 different subunits.

The protein localises to the mitochondrion inner membrane. It carries out the reaction a ubiquinone + NADH + 5 H(+)(in) = a ubiquinol + NAD(+) + 4 H(+)(out). Its function is as follows. Core subunit of the mitochondrial membrane respiratory chain NADH dehydrogenase (Complex I) which catalyzes electron transfer from NADH through the respiratory chain, using ubiquinone as an electron acceptor. Part of the enzyme membrane arm which is embedded in the lipid bilayer and involved in proton translocation. The sequence is that of NADH-ubiquinone oxidoreductase chain 4L (MT-ND4L) from Vulpes vulpes (Red fox).